The sequence spans 304 residues: Porphobilinogen deaminase (304 aa).

S-(dipyrrolylmethanemethyl)cysteine is present on Cys240.

The protein belongs to the HMBS family. In terms of assembly, monomer. Dipyrromethane serves as cofactor.

The enzyme catalyses 4 porphobilinogen + H2O = hydroxymethylbilane + 4 NH4(+). It participates in porphyrin-containing compound metabolism; protoporphyrin-IX biosynthesis; coproporphyrinogen-III from 5-aminolevulinate: step 2/4. In terms of biological role, tetrapolymerization of the monopyrrole PBG into the hydroxymethylbilane pre-uroporphyrinogen in several discrete steps. The chain is Porphobilinogen deaminase from Xanthomonas oryzae pv. oryzae (strain KACC10331 / KXO85).